Consider the following 304-residue polypeptide: 4-diphosphocytidyl-2-C-methyl-D-erythritol kinase (304 aa).

Lys20 is an active-site residue. 106 to 116 (PVASGIGGGSG) lines the ATP pocket. Asp148 is an active-site residue.

This sequence belongs to the GHMP kinase family. IspE subfamily.

The enzyme catalyses 4-CDP-2-C-methyl-D-erythritol + ATP = 4-CDP-2-C-methyl-D-erythritol 2-phosphate + ADP + H(+). It participates in isoprenoid biosynthesis; isopentenyl diphosphate biosynthesis via DXP pathway; isopentenyl diphosphate from 1-deoxy-D-xylulose 5-phosphate: step 3/6. Catalyzes the phosphorylation of the position 2 hydroxy group of 4-diphosphocytidyl-2C-methyl-D-erythritol. The sequence is that of 4-diphosphocytidyl-2-C-methyl-D-erythritol kinase from Bartonella bacilliformis (strain ATCC 35685 / KC583 / Herrer 020/F12,63).